A 150-amino-acid chain; its full sequence is MNIEVEMKVLDERMADFIPAYATEGSAGLDLRACLDEEVVLQPGETFLVPTGLAIYLANPAYTAVLLPRSGLGHKHGIVLGNLVGLIDSDYQGELKVSLWNRGSEPFTVKPFERIAQMVIVPVVQAGFKRVEEFVGSSRGEGGFGSTGSH.

Substrate-binding positions include 69–71 (RSG), Asn82, 86–88 (LID), and Lys96.

This sequence belongs to the dUTPase family. Mg(2+) serves as cofactor.

It catalyses the reaction dUTP + H2O = dUMP + diphosphate + H(+). It participates in pyrimidine metabolism; dUMP biosynthesis; dUMP from dCTP (dUTP route): step 2/2. This enzyme is involved in nucleotide metabolism: it produces dUMP, the immediate precursor of thymidine nucleotides and it decreases the intracellular concentration of dUTP so that uracil cannot be incorporated into DNA. This chain is Deoxyuridine 5'-triphosphate nucleotidohydrolase, found in Neisseria gonorrhoeae (strain NCCP11945).